The chain runs to 365 residues: Transcription factor TCP2 (365 aa).

One can recognise a TCP domain in the interval 42 to 100 (GKDRHSKVLTSKGPRDRRVRLSVSTALQFYDLQDRLGYDQPSKAVEWLIKAAEDSISEL). Residues 130-150 (KSACSSNSDTSKNSSGLSLSR) show a composition bias toward low complexity. Disordered regions lie at residues 130-202 (KSAC…SAPS) and 220-245 (QTHF…HPHH). The region spanning 151–172 (SELRDKARERARERTAKETKER) is the R domain. The segment covering 151-176 (SELRDKARERARERTAKETKERDHNH) has biased composition (basic and acidic residues). Over residues 177-202 (TSFTDLLNSGSDPVNSNRQWMASAPS) the composition is skewed to polar residues.

In terms of assembly, interacts with SPL. Interacts with CRY1. Expressed in cotyledons, particularly in the vascular region, in leaves, roots, buds, flowers and immature siliques.

The protein localises to the nucleus. Functionally, plays a pivotal role in the control of morphogenesis of shoot organs by negatively regulating the expression of boundary-specific genes such as CUC genes, probably through the induction of miRNA (e.g. miR164). Participates in ovule development. Promotes light-regulated transcription of CHS, CAB, HYH and HY5. Positively regulates photomorphogenesis (e.g. hypocotyl elongation inhibition and cotyledon opening in response to blue light). The protein is Transcription factor TCP2 of Arabidopsis thaliana (Mouse-ear cress).